The following is a 234-amino-acid chain: MAELTAIRGLAFDLDGTLIHSAPGLAAAIDQALVAQSLPAAGESRVATWIGNGADVMVERALRWAGVEPTAARVQETRERFDSYYAQTVDSGSTLFLQVKETLAQLAQQGVPMAVVTNKPTPFVAPLLAGLGIGDYFSLIIGGDDVIVKKPHPAPLYLVLGKLGLRASELLFVGDSRNDIQAAQAAGCRSVGMTYGYNYGEAIELSQPDVVLDRFADILPLIGHSSSHNQEPLV.

The active-site Nucleophile is the Asp-13. Asp-13, Asp-15, and Asp-175 together coordinate Mg(2+).

Belongs to the HAD-like hydrolase superfamily. CbbY/CbbZ/Gph/YieH family. In terms of assembly, monomer. Mg(2+) serves as cofactor. It depends on chloride as a cofactor.

It carries out the reaction 2-phosphoglycolate + H2O = glycolate + phosphate. Its pathway is organic acid metabolism; glycolate biosynthesis; glycolate from 2-phosphoglycolate: step 1/1. Functionally, specifically catalyzes the dephosphorylation of 2-phosphoglycolate. Is involved in the dissimilation of the intracellular 2-phosphoglycolate formed during the DNA repair of 3'-phosphoglycolate ends, a major class of DNA lesions induced by oxidative stress. The chain is Phosphoglycolate phosphatase from Pectobacterium atrosepticum (strain SCRI 1043 / ATCC BAA-672) (Erwinia carotovora subsp. atroseptica).